The primary structure comprises 372 residues: MSTAALLTLVRSGGNQVRRRVLLRARGLQDDRWVMPTCHSSTSEPKWSRFDPDGSGRPATWDNFGIWDNRLEEPILLPPSIKYGKPIPKVSLQNVGSASQIGKRKENEDRFGFAQLTNEVLYFAVYDGHGGPAAADFCHTHMEKCILDLLPKEENLETVLTLAFLEIDKTFARHAHLSADATLLTSGTTATVALLRDGIELVIASVGDSRAILCRKGKPMKLTIDHTPERKDEKERIKKCGGFVAWNSLGQPHVNGRLAMTRSLGDLDLKTSGVIAEPETKRIKLHHADDSFLVLTTDGINFMVNSQEICDFVNQCHDPNEAAHAVTEQAIQYGTEDNTTAVVVPFGAWGKYKNSEITFSFSRSFASSGRWA.

A mitochondrion-targeting transit peptide spans 1-29; it reads MSTAALLTLVRSGGNQVRRRVLLRARGLQ. Positions 46-61 are critical for association with the BCKDH complex; sequence KWSRFDPDGSGRPATW. The PPM-type phosphatase domain occupies 94–346; that stretch reads NVGSASQIGK…DNTTAVVVPF (253 aa). Mn(2+) contacts are provided by aspartate 127 and glycine 128. Serine 248 bears the Phosphoserine mark. Mn(2+) is bound by residues aspartate 298 and aspartate 337.

Belongs to the PP2C family. Monomer. Interacts with E1 and E2 components of the branched-chain alpha-ketoacid dehydrogenase (BCKDH) complex; this interaction requires colocalization in mitochondria. Interacts with BCKDHA but not with BCKDHB of the E1 component. Interacts with the 24-meric E2 core composed of DBT monomers with a 24:1 stoichiometry; the N-terminal region (residues 49-61) of PPM1K and C-terminal linker of the lipoyl domain of DBT (residues 145-160) are critical for this interaction, whereas the lipoyl prosthetic group is dispensable. Competes with BCKDK for binding to the E2 core; this interaction is modulated by branched-chain alpha-keto acids. At steady state, BCKDH holoenzyme preferentially binds BCKDK and BCKDHA is phosphorylated. In response to high levels of branched-chain alpha-keto acids, the inhibitory BCKDK is replaced by activating PPM1K leading to BCKDHA dephosphorylation and BCAA degradation. It depends on Mn(2+) as a cofactor.

It localises to the mitochondrion matrix. The enzyme catalyses O-phospho-L-seryl-[3-methyl-2-oxobutanoate dehydrogenase] + H2O = L-seryl-[3-methyl-2-oxobutanoate dehydrogenase] + phosphate. It catalyses the reaction O-phospho-L-seryl-[protein] + H2O = L-seryl-[protein] + phosphate. Its pathway is protein modification. Serine/threonine-protein phosphatase component of macronutrients metabolism. Forms a functional kinase and phosphatase pair with BCKDK, serving as a metabolic regulatory node that coordinates branched-chain amino acids (BCAAs) with glucose and lipid metabolism via two distinct phosphoprotein targets: mitochondrial BCKDHA subunit of the branched-chain alpha-ketoacid dehydrogenase (BCKDH) complex and cytosolic ACLY, a lipogenic enzyme of Krebs cycle. At high levels of branched-chain ketoacids, dephosphorylates and activates mitochondrial BCKDH complex, a multisubunit complex consisting of three multimeric components each involved in different steps of BCAA catabolism: E1 composed of BCKDHA and BCKDHB, E2 core composed of DBT monomers, and E3 composed of DLD monomers. Tightly associates with the E2 component of BCKDH complex and dephosphorylates BCKDHA on Ser-347. Regulates the reversible phosphorylation of ACLY in response to changes in cellular carbohydrate abundance such as occurs during fasting to feeding metabolic transition. At fasting state, appears to dephosphorylate ACLY on Ser-455 and inactivate it. Refeeding stimulates MLXIPL/ChREBP transcription factor, leading to increased BCKDK to PPM1K expression ratio, phosphorylation and activation of ACLY that ultimately results in the generation of malonyl-CoA and oxaloacetate immediate substrates of de novo lipogenesis and gluconeogenesis, respectively. Recognizes phosphosites having SxS or RxxS motifs and strictly depends on Mn(2+) ions for the phosphatase activity. Regulates Ca(2+)-induced opening of mitochondrial transition pore and apoptotic cell death. This chain is Protein phosphatase Mn(2+)-dependent 1K (PPM1K), found in Bos taurus (Bovine).